The sequence spans 451 residues: Cyclin-dependent kinase 18 (451 aa).

A phosphoserine mark is found at serine 12, serine 51, serine 66, serine 75, and serine 109. The 282-residue stretch at 121–402 folds into the Protein kinase domain; it reads YVKLDKLGEG…AEAALNHPYF (282 aa). ATP-binding positions include 127-135 and lysine 150; that span reads LGEGTYATV. Aspartate 242 serves as the catalytic Proton acceptor. 2 positions are modified to phosphoserine: serine 417 and serine 420.

It belongs to the protein kinase superfamily. CMGC Ser/Thr protein kinase family. CDC2/CDKX subfamily. In terms of tissue distribution, in brain, kidney, intestine and at a much lower level, in fetal tissues.

The enzyme catalyses L-seryl-[protein] + ATP = O-phospho-L-seryl-[protein] + ADP + H(+). The catalysed reaction is L-threonyl-[protein] + ATP = O-phospho-L-threonyl-[protein] + ADP + H(+). Functionally, may play a role in signal transduction cascades in terminally differentiated cells. In Mus musculus (Mouse), this protein is Cyclin-dependent kinase 18 (Cdk18).